Reading from the N-terminus, the 285-residue chain is Small ribosomal subunit protein uS2 (285 aa).

Residues 262–285 form a disordered region; that stretch reads NDDWNEDDTAPAAPGAASWGGAAF. A compositionally biased stretch (low complexity) spans 271 to 285; the sequence is APAAPGAASWGGAAF.

The protein belongs to the universal ribosomal protein uS2 family. In terms of assembly, component of the small ribosomal subunit. Mature ribosomes consist of a small (40S) and a large (60S) subunit. The 40S subunit contains about 33 different proteins and 1 molecule of RNA (18S). The 60S subunit contains about 49 different proteins and 3 molecules of RNA (28S, 5.8S and 5S). Interacts with ribosomal protein S21.

It is found in the cytoplasm. In terms of biological role, required for the assembly and/or stability of the 40S ribosomal subunit. Required for the processing of the 20S rRNA-precursor to mature 18S rRNA in a late step of the maturation of 40S ribosomal subunits. This Anopheles gambiae (African malaria mosquito) protein is Small ribosomal subunit protein uS2.